Reading from the N-terminus, the 384-residue chain is Histidinol-phosphate aminotransferase 2 (384 aa).

Lys236 carries the N6-(pyridoxal phosphate)lysine modification.

It belongs to the class-II pyridoxal-phosphate-dependent aminotransferase family. Histidinol-phosphate aminotransferase subfamily. In terms of assembly, homodimer. Requires pyridoxal 5'-phosphate as cofactor.

It catalyses the reaction L-histidinol phosphate + 2-oxoglutarate = 3-(imidazol-4-yl)-2-oxopropyl phosphate + L-glutamate. It participates in amino-acid biosynthesis; L-histidine biosynthesis; L-histidine from 5-phospho-alpha-D-ribose 1-diphosphate: step 7/9. This chain is Histidinol-phosphate aminotransferase 2 (hisC2), found in Nostoc sp. (strain PCC 7120 / SAG 25.82 / UTEX 2576).